Reading from the N-terminus, the 594-residue chain is Golgi-associated RAB2 interactor protein 4 (594 aa).

The segment at 390–525 is disordered; it reads AAGLPVSTRQ…SSGSSKRLGR (136 aa). Positions 396–406 are enriched in polar residues; sequence STRQSKSSLSG. 3 stretches are compositionally biased toward basic and acidic residues: residues 408 to 433, 442 to 455, and 468 to 477; these read HGRE…DKAL, TGES…DKIA, and ASRDGKKEKG. A compositionally biased stretch (low complexity) spans 510 to 521; the sequence is RSSSTTSSGSSK.

Belongs to the GARIN family. As to quaternary structure, interacts (via N-terminus) with RAB2B (in GTP-bound form).

The protein resides in the golgi apparatus. RAB2B effector protein required for the compacted Golgi morphology, probably through interaction with small GTPase RAB2B. The sequence is that of Golgi-associated RAB2 interactor protein 4 (GARIN4) from Macaca fascicularis (Crab-eating macaque).